Here is a 102-residue protein sequence, read N- to C-terminus: DET1- and DDB1-associated protein 1 (102 aa).

Residues 67-102 (NAAKKRDQEQVEIEGENSAPPRKIARTDSQDMNEDT) form a disordered region.

This sequence belongs to the DDA1 family. In terms of assembly, component of numerous DCX (DDB1-CUL4-X-box) E3 ubiquitin-protein ligase complexes which consist of a core of DDB1, cullin-4 (CUL4A or CUL4B), DDA1 and RBX1.

It functions in the pathway protein modification; protein ubiquitination. Functions as a component of numerous distinct DCX (DDB1-CUL4-X-box) E3 ubiquitin-protein ligase complexes which mediate the ubiquitination and subsequent proteasomal degradation of target proteins. In the DCX complexes, acts as a scaffolding subunit required to stabilize the complex. This chain is DET1- and DDB1-associated protein 1, found in Gallus gallus (Chicken).